Reading from the N-terminus, the 576-residue chain is Rop guanine nucleotide exchange factor 13 (576 aa).

Residues 119–485 (KSCYFAYVTE…QLTQNPELAM (367 aa)) enclose the PRONE domain. The segment covering 557–570 (KTTYLESLGTTRSP) has biased composition (polar residues). The tract at residues 557-576 (KTTYLESLGTTRSPTAGRYS) is disordered.

Interacts with PRK6. Specifically expressed in mature flowers.

Guanine-nucleotide exchange factor (GEF) that acts as an activator of Rop (Rho of plants) GTPases by promoting the exchange of GDP for GTP. The protein is Rop guanine nucleotide exchange factor 13 of Arabidopsis thaliana (Mouse-ear cress).